The chain runs to 177 residues: Large ribosomal subunit protein uL6 (177 aa).

This sequence belongs to the universal ribosomal protein uL6 family. Part of the 50S ribosomal subunit.

This protein binds to the 23S rRNA, and is important in its secondary structure. It is located near the subunit interface in the base of the L7/L12 stalk, and near the tRNA binding site of the peptidyltransferase center. The sequence is that of Large ribosomal subunit protein uL6 from Psychrobacter arcticus (strain DSM 17307 / VKM B-2377 / 273-4).